We begin with the raw amino-acid sequence, 616 residues long: Zinc metalloproteinase nas-36 (616 aa).

The first 21 residues, 1–21, serve as a signal peptide directing secretion; it reads MRRFCRLLFLNSLLSISICKA. Residues 22-125 constitute a propeptide that is removed on maturation; that stretch reads QNPAHLVADE…SKDKTKRLRR (104 aa). In terms of domain architecture, Peptidase M12A spans 126 to 321; sequence SFVSDKTATW…VATINTAYCK (196 aa). 9 cysteine pairs are disulfide-bonded: Cys168/Cys320, Cys191/Cys210, Cys324/Cys345, Cys347/Cys356, Cys367/Cys396, Cys424/Cys444, Cys518/Cys549, Cys522/Cys554, and Cys534/Cys539. An N-linked (GlcNAc...) asparagine glycan is attached at Asn173. His218 contributes to the Zn(2+) binding site. Glu219 is a catalytic residue. Zn(2+) contacts are provided by His222 and His228. In terms of domain architecture, EGF-like spans 316–357; it reads NTAYCKEECKSEKTECEYGGYMRPSKCSECLCPDGLGGEKCE. One can recognise a CUB domain in the interval 367–481; sequence CGGILELSDE…IGFKIQVRST (115 aa). Residues 506-555 enclose the TSP type-1 domain; the sequence is PNVWADWGEWSMCSRTCGGCGIRSRVRSCRSKKCEGRRQEFGTCNLKACP.

It depends on Zn(2+) as a cofactor.

It localises to the secreted. Functionally, mtalloprotease. Involved in molting, a process during larval stages in which a new cuticle is formed and the old cuticle is shed. The sequence is that of Zinc metalloproteinase nas-36 from Caenorhabditis briggsae.